The primary structure comprises 754 residues: MAIVNHTLGFPRVGLRRELKKAQESYWAGNATQEELLTVGRELRARHWQQQKDAGVDLLPVGDFAWYDHVLTTSLLLGNVPARHQNEDGSVDLDTLFRIGRGRAPTGQPAAAAEMTKWFNTNYHYMVPEFTKGQQFKLTWTQLLDEVDEALALGHKVKPVLLGPVTYLWLGKVKGEQFDRLSLLQDILPVYQQVLAELTKRGIEWVQIDEPALALELSQEWLAAFKPAYDALQGQVKLLLTTYFDSVSQNLETIKALPVQGLHIDLVHGKDDAATLSAQLPANWVLSLGVINGRNVWRADLSNWFERLQPLVGTRDLWLGSSCSLLHSPIDLSVEVRLDDEVKSWFAFAIQKCAELSLLSQALNSGNGQALEAYSAPIRARRTSTRVNNVAVAQRLAAITAQDSQRQNVYSVRADAQRERFNLPAWPTTTIGSFPQTTEIRGLRLDFKQGRLDGNNYRTGIAEHIKQAVAEQERLGLDVLVHGEAERNDMVEYFGEHLDGFVFTQNGWVQSYGSRCVKPPVIIGDVSRPEAITVEWAKYAQSLTDKPMKGMLTGPVTILCWSFPREDVTRETIAKQIALALRDEVADLEAAGIGIIQIDEPALREGLPLHRSDWDAYLAWAVDAFRLNAAVAKDDTQIHTHMCYCEFNDIMDSIAALDADVITIETSRSDMELLESFEEFEYPNEIGPGVYDIHSPNVPSVEWMEALLKKAAQRIPAERLWVNPDCGLKTRGWPETRQALANMVQAAQRLRETQ.

Residues 17 to 20 and K117 each bind 5-methyltetrahydropteroyltri-L-glutamate; that span reads RELK. L-homocysteine is bound by residues 431–433 and E484; that span reads IGS. Residues 431-433 and E484 contribute to the L-methionine site; that span reads IGS. Residues 515-516 and W561 contribute to the 5-methyltetrahydropteroyltri-L-glutamate site; that span reads RC. D599 provides a ligand contact to L-homocysteine. L-methionine is bound at residue D599. E605 lines the 5-methyltetrahydropteroyltri-L-glutamate pocket. Zn(2+) contacts are provided by H641, C643, and E665. The Proton donor role is filled by H694. C726 contributes to the Zn(2+) binding site.

It belongs to the vitamin-B12 independent methionine synthase family. Requires Zn(2+) as cofactor.

It catalyses the reaction 5-methyltetrahydropteroyltri-L-glutamate + L-homocysteine = tetrahydropteroyltri-L-glutamate + L-methionine. It participates in amino-acid biosynthesis; L-methionine biosynthesis via de novo pathway; L-methionine from L-homocysteine (MetE route): step 1/1. In terms of biological role, catalyzes the transfer of a methyl group from 5-methyltetrahydrofolate to homocysteine resulting in methionine formation. This Pectobacterium atrosepticum (strain SCRI 1043 / ATCC BAA-672) (Erwinia carotovora subsp. atroseptica) protein is 5-methyltetrahydropteroyltriglutamate--homocysteine methyltransferase.